The chain runs to 339 residues: Transmembrane protein 120B (339 aa).

Residues 1–77 (MSGQLERCER…ASREEAELVQ (77 aa)) adopt a coiled-coil conformation. Helical transmembrane passes span 102–124 (GLYLNLVLGNVNVTLLSNQAKFA), 132–152 (FKLYLTIILLLGAVACRFVLH), 159–179 (VFNFLLVWYYCTLTIRESILI), 187–207 (GWWVSHHYVSTFLSGVMLTWP), 270–290 (FLLPFLFCGHFWQLYNAVTLF), and 302–322 (QVFVLAFTFLILFLGNFLTTL).

The protein belongs to the TMEM120 family. In terms of assembly, heterooligomer with TMEM120A.

Its subcellular location is the nucleus inner membrane. Functionally, necessary for efficient adipogenesis. Does not show ion channel activity. The polypeptide is Transmembrane protein 120B (Homo sapiens (Human)).